Reading from the N-terminus, the 77-residue chain is Small ribosomal subunit protein bS16c (77 aa).

This sequence belongs to the bacterial ribosomal protein bS16 family.

It is found in the plastid. Its subcellular location is the cyanelle. In Cyanophora paradoxa, this protein is Small ribosomal subunit protein bS16c.